The primary structure comprises 160 residues: Phosphopantetheine adenylyltransferase (160 aa).

S8 is a substrate binding site. Residues 8 to 9 and H16 contribute to the ATP site; that span reads SF. Substrate-binding residues include K40, L74, and K88. Residues 89–91, E99, and 124–130 contribute to the ATP site; these read GLR and YSFVSST.

Belongs to the bacterial CoaD family. Homohexamer. Requires Mg(2+) as cofactor.

Its subcellular location is the cytoplasm. It carries out the reaction (R)-4'-phosphopantetheine + ATP + H(+) = 3'-dephospho-CoA + diphosphate. The protein operates within cofactor biosynthesis; coenzyme A biosynthesis; CoA from (R)-pantothenate: step 4/5. Functionally, reversibly transfers an adenylyl group from ATP to 4'-phosphopantetheine, yielding dephospho-CoA (dPCoA) and pyrophosphate. The polypeptide is Phosphopantetheine adenylyltransferase (Thermus thermophilus (strain ATCC BAA-163 / DSM 7039 / HB27)).